Here is a 148-residue protein sequence, read N- to C-terminus: RxLR effector protein SFI7 (148 aa).

Residues 1–22 form the signal peptide; the sequence is MRAYFVLLVAATAILTYGGATA. N32 is a glycosylation site (N-linked (GlcNAc...) asparagine). The RxLR-dEER signature appears at 44-58; it reads RSLRVAPSGGNGEER.

Belongs to the RxLR effector family.

Its subcellular location is the secreted. It localises to the host cytoplasm. It is found in the host cell membrane. Functionally, effector that suppresses flg22-induced post-translational MAP kinase activation in tomato but not in Arabidopsis. The perception of highly conserved pathogen- or microbe-associated molecular patterns (PAMPs/MAMPs), such as flg22, triggers converging signaling pathways recruiting MAP kinase cascades and inducing transcriptional re-programming, yielding a generic antimicrobial response. Also partially attenuates INF1-triggered cell death. This chain is RxLR effector protein SFI7, found in Phytophthora infestans (strain T30-4) (Potato late blight agent).